A 138-amino-acid polypeptide reads, in one-letter code: Histone H2B (138 aa).

Over residues 1–10 (MPPKAAEKKP) the composition is skewed to basic and acidic residues. A disordered region spans residues 1–47 (MPPKAAEKKPSTAGKAPAGKAPEKKEAGKKTTAAGGEKKKRSKTRKE). N6-acetyllysine; alternate is present on residues K8 and K9. Residues K8 and K9 each participate in a glycyl lysine isopeptide (Lys-Gly) (interchain with G-Cter in SUMO); alternate cross-link. Residues 11-20 (STAGKAPAGK) show a composition bias toward low complexity. Position 15 is an N6-acetyllysine (K15). K24 is subject to N6-acetyllysine; alternate. K24 participates in a covalent cross-link: Glycyl lysine isopeptide (Lys-Gly) (interchain with G-Cter in SUMO); alternate. K25 is covalently cross-linked (Glycyl lysine isopeptide (Lys-Gly) (interchain with G-Cter in SUMO)). K132 participates in a covalent cross-link: Glycyl lysine isopeptide (Lys-Gly) (interchain with G-Cter in ubiquitin).

This sequence belongs to the histone H2B family. As to quaternary structure, the nucleosome is a histone octamer containing two molecules each of H2A, H2B, H3 and H4 assembled in one H3-H4 heterotetramer and two H2A-H2B heterodimers. The octamer wraps approximately 147 bp of DNA. Post-translationally, monoubiquitinated to form H2BK123ub1. H2BK123ub1 gives a specific tag for epigenetic transcriptional activation and is also prerequisite for H3K4me and H3K79me formation. H2BK123ub1 also modulates the formation of double-strand breaks during meiosis and is a prerequisite for DNA-damage checkpoint activation. In terms of processing, acetylated by GCN5 to form H2BK11ac and H2BK16ac. H2BK16ac can also be formed by ESA1. Acetylation of N-terminal lysines and particularly formation of H2BK11acK16ac has a positive effect on transcription. Sumoylation to form H2BK6su or H2BK7su, and probably also H2BK16su or H2BK17su, occurs preferentially near the telomeres and represses gene transcription.

It localises to the nucleus. Its subcellular location is the chromosome. Core component of nucleosome. Nucleosomes wrap and compact DNA into chromatin, limiting DNA accessibility to the cellular machineries which require DNA as a template. Histones thereby play a central role in transcription regulation, DNA repair, DNA replication and chromosomal stability. DNA accessibility is regulated via a complex set of post-translational modifications of histones, also called histone code, and nucleosome remodeling. This chain is Histone H2B (HTB1), found in Ajellomyces capsulatus (Darling's disease fungus).